The sequence spans 176 residues: MANPKVFFDILIGKMKAGRVVMELFADVTPRTANNFRALCTGENGIGKAGKALHYKGSAFHRIIPGFMCQGGDFTRGNGTGGESIYGSKFEDENFKLKHTGPGILSMANSGPNTNGSQFFICTEKTSWLDGKHVVFGKVVDGYNVVKAMEDVGSDMGNPSERVVIEDCGELKNPSS.

One can recognise a PPIase cyclophilin-type domain in the interval 7–170; the sequence is FFDILIGKMK…ERVVIEDCGE (164 aa).

The protein belongs to the cyclophilin-type PPIase family. As to expression, ubiquitous, with highest levels in flowers and lowest levels in roots.

Its subcellular location is the cytoplasm. The catalysed reaction is [protein]-peptidylproline (omega=180) = [protein]-peptidylproline (omega=0). Binds cyclosporin A (CsA). CsA mediates some of its effects via an inhibitory action on PPIase. PPIases accelerate the folding of proteins. It catalyzes the cis-trans isomerization of proline imidic peptide bonds in oligopeptides. The sequence is that of Peptidyl-prolyl cis-trans isomerase CYP19-3 (CYP19-3) from Arabidopsis thaliana (Mouse-ear cress).